We begin with the raw amino-acid sequence, 938 residues long: Myocardin (938 aa).

The MEF2C-binding motif lies at 12–27; the sequence is IRRKFRSVLQLRLQQR. 3 RPEL repeats span residues 18-43, 62-87, and 106-131; these read SVLQ…PPLK, DSLR…QAST, and DDLN…PMDS. The segment at 37 to 64 is disordered; it reads GLIPPLKSPTEFHDPRKKLDSAKTEDSL. Basic and acidic residues predominate over residues 46-64; it reads TEFHDPRKKLDSAKTEDSL. Residues 153-205 are HDAC5-binding; that stretch reads FEDDSSRDGLSPDQARSEDPQGSGGSTPDIKSTEAPLAGPLDTIQDLTPGSES. 2 disordered regions span residues 155–282 and 339–381; these read DDSS…PPPM and NEQM…PLPP. Over residues 210 to 221 the composition is skewed to polar residues; it reads TASQLSNQSDSG. Residues 248-265 are compositionally biased toward basic residues; sequence NRHKKPKDPKPKVKKLKY. Positions 345–360 are enriched in low complexity; sequence NPNSSSTPLNNTPLSP. Polar residues predominate over residues 361–372; it reads VKNSLSGQTGVS. One can recognise an SAP domain in the interval 383-417; the sequence is LDDLKVSELRQQLRIRGLPVSGTKTALVDRLRPFQ. Phosphoserine; by GSK3-beta is present on residues Ser-457, Ser-461, Ser-465, and Ser-469. The tract at residues 501–521 is disordered; that stretch reads ESLLSSLNGGSGPSEPDGLDS. The stretch at 522 to 566 forms a coiled coil; that stretch reads EKDKMLVEKQKVINQLTWKLRQEQRQVEELRMQLQKQKSGCNDQK. The disordered stretch occupies residues 586–606; it reads AAQQASGKGQGHSSDSPPPAC. A compositionally biased stretch (polar residues) spans 588–600; sequence QQASGKGQGHSSD. A phosphoserine; by GSK3-beta mark is found at Ser-627, Ser-631, Ser-635, and Ser-639. 2 stretches are compositionally biased toward polar residues: residues 667-694 and 701-713; these read GAQR…QSSD and SIPS…SSPT. The tract at residues 667 to 734 is disordered; it reads GAQRENHGVS…DAVKQQMTRS (68 aa). The required for interaction with and ubiquitination by STUB1 stretch occupies residues 717–938; the sequence is ITQPPSYEDA…SPMDLHLQQW (222 aa). Phosphoserine; by MAPK1 and MAPK3 is present on residues Ser-815, Ser-862, and Ser-869. Thr-896 bears the Phosphothreonine; by MAPK1 and MAPK3 mark.

In terms of assembly, homodimer. Interacts with MLLT7/FOXO4. Interacts with SRF, its association does not depend on specific DNA sequences for ternary complex formation. Interacts (via C-terminal) with EP300 (via the CREB-binding domain). Interacts with HDAC4 and HDAC5. Interacts with MEF2C. Interacts (via C-terminus) with STUB1/CHIP. Interacts with PURB. Ubiquitinated; by STUB1/CHIP at the C-terminus, leading to its degradation by the proteasome. Phosphorylation by GSK3B is required for STUB1/CHIP-mediated ubiquitination. In terms of processing, phosphorylation negatively regulates transcriptional activity. Phosphorylated; by GSK3B. In terms of tissue distribution, abundantly expressed in the heart, aorta media and bladder, weakly expressed in the stomach, intestine and lung.

The protein resides in the nucleus. Its function is as follows. Smooth muscle cells (SM) and cardiac muscle cells-specific transcriptional factor which uses the canonical single or multiple CArG boxes DNA sequence. Acts as a cofactor of serum response factor (SRF) with the potential to modulate SRF-target genes. Plays a crucial role in cardiogenesis, urinary bladder development, and differentiation of the smooth muscle cell lineage (myogenesis). Positively regulates the transcription of genes involved in vascular smooth muscle contraction. The chain is Myocardin (Myocd) from Rattus norvegicus (Rat).